A 224-amino-acid polypeptide reads, in one-letter code: Cytidylate kinase (224 aa).

10–18 (GPASAGKST) serves as a coordination point for ATP.

Belongs to the cytidylate kinase family. Type 1 subfamily.

It localises to the cytoplasm. The catalysed reaction is CMP + ATP = CDP + ADP. It catalyses the reaction dCMP + ATP = dCDP + ADP. The sequence is that of Cytidylate kinase from Leuconostoc mesenteroides subsp. mesenteroides (strain ATCC 8293 / DSM 20343 / BCRC 11652 / CCM 1803 / JCM 6124 / NCDO 523 / NBRC 100496 / NCIMB 8023 / NCTC 12954 / NRRL B-1118 / 37Y).